The following is a 370-amino-acid chain: Early nodulin-like protein 1 (370 aa).

The signal sequence occupies residues 1–27 (MSAIMKSLCFSFLILASFATFFSVADA). In terms of domain architecture, Phytocyanin spans 28–129 (WRFNVGGNGA…GQKLIVVVLA (102 aa)). A glycan (N-linked (GlcNAc...) asparagine) is linked at N58. A disulfide bond links C83 and C117. The segment covering 135-175 (SAPAHSPVPSVSPTQPPKSHSPVSPVAPASAPSKSQPPRSS) has biased composition (low complexity). Residues 135–347 (SAPAHSPVPS…PAPSPRTNSA (213 aa)) form a disordered region. Over residues 176–194 (VSPAQPPKSSSPISHTPAL) the composition is skewed to polar residues. 2 stretches are compositionally biased toward low complexity: residues 195-205 (SPSHATSHSPA) and 215-290 (SPVS…QSPA). Positions 291 to 305 (TPSPMTPQSPSPVSS) are enriched in pro residues. Positions 306–318 (PSPDQSAAPSDQS) are enriched in low complexity. A compositionally biased stretch (polar residues) spans 319–334 (TPLAPSPSETTPTADN). N-linked (GlcNAc...) asparagine glycosylation occurs at N334. The GPI-anchor amidated asparagine moiety is linked to residue N345. Positions 346-370 (SASGLAVTSVMSTLFSATFTFLMFA) are cleaved as a propeptide — removed in mature form.

The protein belongs to the early nodulin-like (ENODL) family. Mostly expressed in stems, leaves and flowers, and, to a lower extent, in seedlings, roots and seeds.

It is found in the cell membrane. In terms of biological role, may act as a carbohydrate transporter. In Arabidopsis thaliana (Mouse-ear cress), this protein is Early nodulin-like protein 1.